A 321-amino-acid polypeptide reads, in one-letter code: Fructose-1,6-bisphosphatase 2 class 2 (321 aa).

Residues Asp-32, Glu-56, Asp-84, and Glu-87 each coordinate Mn(2+). Residues 87-89 (EGT), Tyr-118, 163-165 (KPR), 185-187 (DGD), and Gly-209 each bind substrate. Glu-212 lines the Mn(2+) pocket.

The protein belongs to the FBPase class 2 family. In terms of assembly, homodimer. Mn(2+) serves as cofactor.

It carries out the reaction beta-D-fructose 1,6-bisphosphate + H2O = beta-D-fructose 6-phosphate + phosphate. Competitively inhibited by low concentrations of phosphate (IC50 of 1.2 mM) and is also sensitive to Li(+) (IC50 of 15.8 mM). Also inhibited by 1 mM ATP or 50 mM KCl (60% and 20% residual activity, respectively). Slightly activated (40-50%) by the addition of 1 mM dithiothreitol in vitro. Its function is as follows. Catalyzes the hydrolysis of fructose 1,6-bisphosphate to fructose 6-phosphate. Also displays a low activity toward glucose 1,6-bisphosphate, and no activity against ribulose 1,5-bisphosphate, fructose 2,6-bisphosphate, or fructose 1-phosphate. This is Fructose-1,6-bisphosphatase 2 class 2 (yggF) from Escherichia coli (strain K12).